The chain runs to 241 residues: F-box protein At3g22350 (241 aa).

Residues 1–44 enclose the F-box domain; the sequence is MSDLPLDLVEEILSRVSATSLKRLRSTCKQWNTLFKKRSFSQKH.

This Arabidopsis thaliana (Mouse-ear cress) protein is F-box protein At3g22350.